A 330-amino-acid polypeptide reads, in one-letter code: Probable WRKY transcription factor 74 (330 aa).

A DNA-binding region (WRKY) is located at residues 256-322 (KIADIPPDEY…YEGEHNHSRI (67 aa)).

The protein localises to the nucleus. Its function is as follows. Transcription factor. Interacts specifically with the W box (5'-(T)TGAC[CT]-3'), a frequently occurring elicitor-responsive cis-acting element. This is Probable WRKY transcription factor 74 (WRKY74) from Arabidopsis thaliana (Mouse-ear cress).